We begin with the raw amino-acid sequence, 466 residues long: GATA-binding factor 2 (466 aa).

Composition is skewed to low complexity over residues 139–155 (GSSTSSTASVSSLTPAS) and 174–188 (PDPNSTSAASPSSSA). The interval 139-196 (GSSTSSTASVSSLTPASHSGSHLFGFPPTPPKEVSPDPNSTSAASPSSSAGARQEDKD) is disordered. 2 GATA-type zinc fingers span residues 281–305 (CVNCGATATPLWRRDGTGHYLCNAC) and 335–359 (CANCQTTTTTLWRRNANGDPVCNAC). The interval 436–466 (GHILPTPTPIHPSSSISFGHPHPSSMVTAMG) is disordered.

Expressed in all developmental stages of erythroid cells but is additionally found in a limited subset of other tissues.

The protein resides in the nucleus. Functionally, transcriptional activator which probably serves as a general switch factor for cell-specific development. It binds to DNA sites with the consensus sequence 5'-[AT]GATA[AG]-3' within regulatory regions of genes. The protein is GATA-binding factor 2 (GATA2) of Gallus gallus (Chicken).